Consider the following 362-residue polypeptide: GDSL esterase/lipase At5g45670 (362 aa).

The first 23 residues, 1–23 (MARMSLMIMMIMVAVTMINIAKS), serve as a signal peptide directing secretion. The active-site Nucleophile is serine 36. Active-site residues include aspartate 326 and histidine 329.

Belongs to the 'GDSL' lipolytic enzyme family.

It is found in the secreted. This Arabidopsis thaliana (Mouse-ear cress) protein is GDSL esterase/lipase At5g45670.